The following is a 212-amino-acid chain: Maleylacetoacetate isomerase (212 aa).

The GST N-terminal domain maps to 1-83 (MKLYTYYRST…YLEERYPQPA (83 aa)). The region spanning 88–211 (DPLRRARERG…HPANQPDTPA (124 aa)) is the GST C-terminal domain.

The protein belongs to the GST superfamily. Zeta family.

It catalyses the reaction 4-maleylacetoacetate = 4-fumarylacetoacetate. Its pathway is amino-acid degradation; L-phenylalanine degradation; acetoacetate and fumarate from L-phenylalanine: step 5/6. The polypeptide is Maleylacetoacetate isomerase (maiA) (Pseudomonas aeruginosa (strain ATCC 15692 / DSM 22644 / CIP 104116 / JCM 14847 / LMG 12228 / 1C / PRS 101 / PAO1)).